A 451-amino-acid chain; its full sequence is Trigger factor (451 aa).

In terms of domain architecture, PPIase FKBP-type spans 165–250 (DDKLTIDFEG…LHQIQVREAL (86 aa)).

Belongs to the FKBP-type PPIase family. Tig subfamily.

Its subcellular location is the cytoplasm. It carries out the reaction [protein]-peptidylproline (omega=180) = [protein]-peptidylproline (omega=0). In terms of biological role, involved in protein export. Acts as a chaperone by maintaining the newly synthesized protein in an open conformation. Functions as a peptidyl-prolyl cis-trans isomerase. This Helicobacter pylori (strain P12) protein is Trigger factor.